The sequence spans 511 residues: Pancreatic alpha-amylase (511 aa).

Positions Met1 to Ala15 are cleaved as a signal peptide. Gln16 is modified (pyrrolidone carboxylic acid). 3 cysteine pairs are disulfide-bonded: Cys43–Cys101, Cys85–Cys130, and Cys156–Cys175. Asn115, Arg173, and Asp182 together coordinate Ca(2+). Residue Arg210 participates in chloride binding. The active-site Nucleophile is the Asp212. His216 contributes to the Ca(2+) binding site. The active-site Proton donor is the Glu248. Chloride contacts are provided by Asn313 and Arg352. A disulfide bridge links Cys393 with Cys399. Asn427 carries an N-linked (GlcNAc...) asparagine glycan. A disulfide bond links Cys465 and Cys477.

The protein belongs to the glycosyl hydrolase 13 family. Binds to the sea anemone inhibitor helianthamide and magnificamide. Ca(2+) serves as cofactor. The cofactor is chloride.

Its subcellular location is the secreted. The protein localises to the extracellular space. It carries out the reaction Endohydrolysis of (1-&gt;4)-alpha-D-glucosidic linkages in polysaccharides containing three or more (1-&gt;4)-alpha-linked D-glucose units.. This Sus scrofa (Pig) protein is Pancreatic alpha-amylase (AMY2).